A 217-amino-acid polypeptide reads, in one-letter code: Thymidylate kinase (217 aa).

An ATP-binding site is contributed by 16-23 (GIDGAGKT).

It belongs to the thymidylate kinase family.

It carries out the reaction dTMP + ATP = dTDP + ADP. In terms of biological role, phosphorylation of dTMP to form dTDP in both de novo and salvage pathways of dTTP synthesis. In Xylella fastidiosa (strain M12), this protein is Thymidylate kinase.